Reading from the N-terminus, the 321-residue chain is MNKKVNEPIIIEFGDILNLEYIELIKNLNIELIKYILYSRNQCSIPVNQLLSEFKNINNNNNNYNNNNYNNNNKIKIPFKKKKFIESLISLFLEIDEIYFNCLDQDEELPIVVSVLLGSSIFNLKEVYIFYFGSYNDYKNGNNNNNNNNNNNKSNNGFQHDENRNKLREIMMKLVIESPDSFSVLQRPLKTNICIYKKINNITDCLNNIYNNNNNNNNNNNNNNNNNNDSRDQLFIPQQDFQLKIKKSTKITVFNFTNSNINDKFDFKITEISLKSISKNSDHINNENNTNSNNDDNSNNSNNNNENYMWYQFHTSINGVN.

The tract at residues 280 to 306 is disordered; the sequence is NSDHINNENNTNSNNDDNSNNSNNNNE. Positions 286-306 are enriched in low complexity; it reads NENNTNSNNDDNSNNSNNNNE.

This is an uncharacterized protein from Dictyostelium discoideum (Social amoeba).